The primary structure comprises 276 residues: Undecaprenyl-diphosphatase (276 aa).

8 helical membrane-spanning segments follow: residues 2-22 (LEIL…FLPI), 43-63 (FIDM…VVLY), 83-103 (WTLW…GLPL), 111-131 (LMNW…FIVI), 147-167 (TLPY…LIPG), 186-206 (YVAA…ASLL), 224-244 (LILA…IRFL), and 255-275 (AFGW…ALLA).

The protein belongs to the UppP family.

Its subcellular location is the cell membrane. It carries out the reaction di-trans,octa-cis-undecaprenyl diphosphate + H2O = di-trans,octa-cis-undecaprenyl phosphate + phosphate + H(+). Its function is as follows. Catalyzes the dephosphorylation of undecaprenyl diphosphate (UPP). Confers resistance to bacitracin. The polypeptide is Undecaprenyl-diphosphatase (Limosilactobacillus fermentum (strain NBRC 3956 / LMG 18251) (Lactobacillus fermentum)).